The following is a 1197-amino-acid chain: Probable DNA polymerase (1197 aa).

It belongs to the DNA polymerase type-B family.

The protein resides in the mitochondrion. It carries out the reaction DNA(n) + a 2'-deoxyribonucleoside 5'-triphosphate = DNA(n+1) + diphosphate. The polypeptide is Probable DNA polymerase (Podospora anserina (Pleurage anserina)).